The following is a 345-amino-acid chain: Phosphoribosylformylglycinamidine cyclo-ligase (345 aa).

It belongs to the AIR synthase family.

It is found in the cytoplasm. It carries out the reaction 2-formamido-N(1)-(5-O-phospho-beta-D-ribosyl)acetamidine + ATP = 5-amino-1-(5-phospho-beta-D-ribosyl)imidazole + ADP + phosphate + H(+). It participates in purine metabolism; IMP biosynthesis via de novo pathway; 5-amino-1-(5-phospho-D-ribosyl)imidazole from N(2)-formyl-N(1)-(5-phospho-D-ribosyl)glycinamide: step 2/2. The chain is Phosphoribosylformylglycinamidine cyclo-ligase from Shigella dysenteriae serotype 1 (strain Sd197).